Here is a 218-residue protein sequence, read N- to C-terminus: Recombination protein RecR (218 aa).

A C4-type zinc finger spans residues Cys-56 to Cys-71. Residues Gly-79 to Pro-195 enclose the Toprim domain.

Belongs to the RecR family.

In terms of biological role, may play a role in DNA repair. It seems to be involved in an RecBC-independent recombinational process of DNA repair. It may act with RecF and RecO. The protein is Recombination protein RecR of Corynebacterium efficiens (strain DSM 44549 / YS-314 / AJ 12310 / JCM 11189 / NBRC 100395).